A 159-amino-acid polypeptide reads, in one-letter code: 2-C-methyl-D-erythritol 2,4-cyclodiphosphate synthase (159 aa).

Positions 8 and 10 each coordinate a divalent metal cation. Residues 8 to 10 (DVH) and 34 to 35 (HS) contribute to the 4-CDP-2-C-methyl-D-erythritol 2-phosphate site. Residue His42 coordinates a divalent metal cation. 4-CDP-2-C-methyl-D-erythritol 2-phosphate contacts are provided by residues 56–58 (DIG), 61–65 (FPDTD), 100–106 (AQAPRML), 132–135 (TTTE), Phe139, and Arg142.

The protein belongs to the IspF family. Homotrimer. It depends on a divalent metal cation as a cofactor.

The enzyme catalyses 4-CDP-2-C-methyl-D-erythritol 2-phosphate = 2-C-methyl-D-erythritol 2,4-cyclic diphosphate + CMP. The protein operates within isoprenoid biosynthesis; isopentenyl diphosphate biosynthesis via DXP pathway; isopentenyl diphosphate from 1-deoxy-D-xylulose 5-phosphate: step 4/6. In terms of biological role, involved in the biosynthesis of isopentenyl diphosphate (IPP) and dimethylallyl diphosphate (DMAPP), two major building blocks of isoprenoid compounds. Catalyzes the conversion of 4-diphosphocytidyl-2-C-methyl-D-erythritol 2-phosphate (CDP-ME2P) to 2-C-methyl-D-erythritol 2,4-cyclodiphosphate (ME-CPP) with a corresponding release of cytidine 5-monophosphate (CMP). The protein is 2-C-methyl-D-erythritol 2,4-cyclodiphosphate synthase of Escherichia coli O45:K1 (strain S88 / ExPEC).